Consider the following 102-residue polypeptide: MAARNHGEVVLEAKKSKLKPPPMFKVILLNDDFTPMDFVVTVLQTFFSMNREQATQIMLKVHMDGAGVCGVYPNDVASTKVEQVVAFARQHQHPLQCVMEEN.

Belongs to the ClpS family. As to quaternary structure, binds to the N-terminal domain of the chaperone ClpA.

Its function is as follows. Involved in the modulation of the specificity of the ClpAP-mediated ATP-dependent protein degradation. The sequence is that of ATP-dependent Clp protease adapter protein ClpS from Nitrosospira multiformis (strain ATCC 25196 / NCIMB 11849 / C 71).